The chain runs to 501 residues: Amidophosphoribosyltransferase (501 aa).

Residue Cys-2 is the Nucleophile of the active site. One can recognise a Glutamine amidotransferase type-2 domain in the interval 2 to 234 (CGIVGIVGKS…PGEAVYITEE (233 aa)). Thr-303, Asp-365, and Asp-366 together coordinate Mg(2+).

The protein in the C-terminal section; belongs to the purine/pyrimidine phosphoribosyltransferase family. Requires Mg(2+) as cofactor.

It carries out the reaction 5-phospho-beta-D-ribosylamine + L-glutamate + diphosphate = 5-phospho-alpha-D-ribose 1-diphosphate + L-glutamine + H2O. The protein operates within purine metabolism; IMP biosynthesis via de novo pathway; N(1)-(5-phospho-D-ribosyl)glycinamide from 5-phospho-alpha-D-ribose 1-diphosphate: step 1/2. Catalyzes the formation of phosphoribosylamine from phosphoribosylpyrophosphate (PRPP) and glutamine. This is Amidophosphoribosyltransferase from Pseudomonas aeruginosa (strain ATCC 15692 / DSM 22644 / CIP 104116 / JCM 14847 / LMG 12228 / 1C / PRS 101 / PAO1).